A 306-amino-acid polypeptide reads, in one-letter code: VRATEKFASMYFFCHSPQSAETDVAERGNKRPVWIMGHMVNAIAQIDEFVNLGANSIETDVSFDSSANPEYTYHGVPCDCGRTCTKWEHFNEFLKGLRKATTPGDSKYHEKLVLVVFDLKTGRLYDNQASDAGKKLAKSLLQNYWNNGNNGGRAYIVLSIPNLAHYKLIAGFKEALTSEGHPELMDKVGYDFSGNDDIGDVANAYKKAGVTGHVWQSDGITNCLLRGLDRVGKAVANRDSSNGYINKVYYWTVDKRQSTRDALDAGVDGIMTNYPDVIADVLNESAYKAKFRIASYDDNPWETYKN.

Val-1 is a signal peptide. Residues 2–27 constitute a propeptide that is removed on maturation; that stretch reads RATEKFASMYFFCHSPQSAETDVAER. His-38 is an active-site residue. Glu-58 and Asp-60 together coordinate Mg(2+). His-74 (nucleophile) is an active-site residue. Disulfide bonds link Cys-78–Cys-84 and Cys-80–Cys-223. Asp-118 contacts Mg(2+). Residue Asn-283 is glycosylated (N-linked (GlcNAc...) asparagine).

This sequence belongs to the arthropod phospholipase D family. Class II subfamily. Requires Mg(2+) as cofactor. Expressed by the venom gland.

The protein resides in the secreted. The catalysed reaction is an N-(acyl)-sphingosylphosphocholine = an N-(acyl)-sphingosyl-1,3-cyclic phosphate + choline. It catalyses the reaction an N-(acyl)-sphingosylphosphoethanolamine = an N-(acyl)-sphingosyl-1,3-cyclic phosphate + ethanolamine. It carries out the reaction a 1-acyl-sn-glycero-3-phosphocholine = a 1-acyl-sn-glycero-2,3-cyclic phosphate + choline. The enzyme catalyses a 1-acyl-sn-glycero-3-phosphoethanolamine = a 1-acyl-sn-glycero-2,3-cyclic phosphate + ethanolamine. In terms of biological role, dermonecrotic toxins cleave the phosphodiester linkage between the phosphate and headgroup of certain phospholipids (sphingolipid and lysolipid substrates), forming an alcohol (often choline) and a cyclic phosphate. This toxin acts on sphingomyelin (SM). It may also act on ceramide phosphoethanolamine (CPE), lysophosphatidylcholine (LPC) and lysophosphatidylethanolamine (LPE), but not on lysophosphatidylserine (LPS), and lysophosphatidylglycerol (LPG). It acts by transphosphatidylation, releasing exclusively cyclic phosphate products as second products. Induces dermonecrosis, hemolysis, increased vascular permeability, edema, inflammatory response, and platelet aggregation. The sequence is that of Dermonecrotic toxin LarSicTox-alphaIB1ai from Loxosceles arizonica (Arizona brown spider).